A 328-amino-acid polypeptide reads, in one-letter code: UPF0421 protein SSP0904 (328 aa).

A run of 4 helical transmembrane segments spans residues leucine 26 to isoleucine 46, leucine 61 to glutamine 81, phenylalanine 84 to valine 104, and leucine 132 to proline 152.

Belongs to the UPF0421 family.

It is found in the cell membrane. This chain is UPF0421 protein SSP0904, found in Staphylococcus saprophyticus subsp. saprophyticus (strain ATCC 15305 / DSM 20229 / NCIMB 8711 / NCTC 7292 / S-41).